Here is a 199-residue protein sequence, read N- to C-terminus: Transgelin-2 (199 aa).

Ala2 is modified (N-acetylalanine). Position 11 is a phosphoserine (Ser11). An N6-acetyllysine mark is found at Lys17 and Lys20. Residues 24–136 enclose the Calponin-homology (CH) domain; it reads PDLEQILIQW…RTLMNLGGLA (113 aa). A Phosphoserine modification is found at Ser163. Lys171 participates in a covalent cross-link: Glycyl lysine isopeptide (Lys-Gly) (interchain with G-Cter in SUMO2). The stretch at 174–199 is one Calponin-like repeat; it reads IGLQMGTNRGASQAGMTGYGMPRQIL. The residue at position 180 (Thr180) is a Phosphothreonine. 2 positions are modified to omega-N-methylarginine: Arg182 and Arg196.

This sequence belongs to the calponin family.

This is Transgelin-2 (Tagln2) from Rattus norvegicus (Rat).